The following is a 164-amino-acid chain: ATP synthase subunit b (164 aa).

A helical transmembrane segment spans residues 10–32 (SAAMLMLFVLMVYFLNKFLYTPF).

It belongs to the ATPase B chain family. As to quaternary structure, F-type ATPases have 2 components, F(1) - the catalytic core - and F(0) - the membrane proton channel. F(1) has five subunits: alpha(3), beta(3), gamma(1), delta(1), epsilon(1). F(0) has three main subunits: a(1), b(2) and c(10-14). The alpha and beta chains form an alternating ring which encloses part of the gamma chain. F(1) is attached to F(0) by a central stalk formed by the gamma and epsilon chains, while a peripheral stalk is formed by the delta and b chains.

Its subcellular location is the cell inner membrane. F(1)F(0) ATP synthase produces ATP from ADP in the presence of a proton or sodium gradient. F-type ATPases consist of two structural domains, F(1) containing the extramembraneous catalytic core and F(0) containing the membrane proton channel, linked together by a central stalk and a peripheral stalk. During catalysis, ATP synthesis in the catalytic domain of F(1) is coupled via a rotary mechanism of the central stalk subunits to proton translocation. Its function is as follows. Component of the F(0) channel, it forms part of the peripheral stalk, linking F(1) to F(0). The polypeptide is ATP synthase subunit b (Thermotoga maritima (strain ATCC 43589 / DSM 3109 / JCM 10099 / NBRC 100826 / MSB8)).